We begin with the raw amino-acid sequence, 232 residues long: 5'-methylthioadenosine/S-adenosylhomocysteine nucleosidase (232 aa).

The Proton acceptor role is filled by glutamate 12. Substrate is bound by residues glycine 78, isoleucine 152, and 173–174 (ME). Residue aspartate 197 is the Proton donor of the active site.

Belongs to the PNP/UDP phosphorylase family. MtnN subfamily. As to quaternary structure, homodimer.

It carries out the reaction S-adenosyl-L-homocysteine + H2O = S-(5-deoxy-D-ribos-5-yl)-L-homocysteine + adenine. The enzyme catalyses S-methyl-5'-thioadenosine + H2O = 5-(methylsulfanyl)-D-ribose + adenine. The catalysed reaction is 5'-deoxyadenosine + H2O = 5-deoxy-D-ribose + adenine. The protein operates within amino-acid biosynthesis; L-methionine biosynthesis via salvage pathway; S-methyl-5-thio-alpha-D-ribose 1-phosphate from S-methyl-5'-thioadenosine (hydrolase route): step 1/2. Its function is as follows. Catalyzes the irreversible cleavage of the glycosidic bond in both 5'-methylthioadenosine (MTA) and S-adenosylhomocysteine (SAH/AdoHcy) to adenine and the corresponding thioribose, 5'-methylthioribose and S-ribosylhomocysteine, respectively. Also cleaves 5'-deoxyadenosine, a toxic by-product of radical S-adenosylmethionine (SAM) enzymes, into 5-deoxyribose and adenine. Thus, is required for in vivo function of the radical SAM enzymes biotin synthase and lipoic acid synthase, that are inhibited by 5'-deoxyadenosine accumulation. In Salmonella paratyphi B (strain ATCC BAA-1250 / SPB7), this protein is 5'-methylthioadenosine/S-adenosylhomocysteine nucleosidase.